Reading from the N-terminus, the 266-residue chain is Undecaprenyl-diphosphatase (266 aa).

8 consecutive transmembrane segments (helical) span residues 1-21 (MVVI…SSTG), 43-63 (FLII…WKDI), 81-101 (LKII…DDII), 109-129 (VLIV…IEVV), 159-179 (LAMI…LLLG), 183-203 (PLAA…ATAL), 219-239 (YLAL…KWFM), and 246-266 (SFAS…VLLY).

Belongs to the UppP family.

The protein localises to the cell inner membrane. It catalyses the reaction di-trans,octa-cis-undecaprenyl diphosphate + H2O = di-trans,octa-cis-undecaprenyl phosphate + phosphate + H(+). In terms of biological role, catalyzes the dephosphorylation of undecaprenyl diphosphate (UPP). Confers resistance to bacitracin. The polypeptide is Undecaprenyl-diphosphatase (Fusobacterium nucleatum subsp. nucleatum (strain ATCC 25586 / DSM 15643 / BCRC 10681 / CIP 101130 / JCM 8532 / KCTC 2640 / LMG 13131 / VPI 4355)).